Consider the following 412-residue polypeptide: Alanyl-tRNA editing protein Aarsd1-A (412 aa).

Zn(2+) is bound by residues His108, His112, Cys208, and His212.

Belongs to the class-II aminoacyl-tRNA synthetase family. Alax-L subfamily. It depends on Zn(2+) as a cofactor.

It localises to the cytoplasm. Functions in trans to edit the amino acid moiety from incorrectly charged tRNA(Ala). In Xenopus laevis (African clawed frog), this protein is Alanyl-tRNA editing protein Aarsd1-A (aarsd1-a).